A 326-amino-acid polypeptide reads, in one-letter code: Malate dehydrogenase (326 aa).

Residue 12 to 18 (GGTGQIA) coordinates NAD(+). Substrate is bound by residues Arg-93 and Arg-99. NAD(+)-binding positions include Asn-106, Gln-113, and 130-132 (VGN). 2 residues coordinate substrate: Asn-132 and Arg-163. Catalysis depends on His-188, which acts as the Proton acceptor.

The protein belongs to the LDH/MDH superfamily. MDH type 2 family.

The catalysed reaction is (S)-malate + NAD(+) = oxaloacetate + NADH + H(+). Functionally, catalyzes the reversible oxidation of malate to oxaloacetate. This is Malate dehydrogenase from Chlamydia trachomatis serovar L2 (strain ATCC VR-902B / DSM 19102 / 434/Bu).